The chain runs to 263 residues: Pyridoxine 5'-phosphate synthase (263 aa).

Asparagine 15 contacts 3-amino-2-oxopropyl phosphate. 17 to 18 provides a ligand contact to 1-deoxy-D-xylulose 5-phosphate; the sequence is DH. Residue arginine 26 participates in 3-amino-2-oxopropyl phosphate binding. Histidine 51 functions as the Proton acceptor in the catalytic mechanism. Arginine 53 and histidine 58 together coordinate 1-deoxy-D-xylulose 5-phosphate. Catalysis depends on glutamate 78, which acts as the Proton acceptor. Threonine 108 lines the 1-deoxy-D-xylulose 5-phosphate pocket. The Proton donor role is filled by histidine 199. Residues glycine 200 and 221 to 222 each bind 3-amino-2-oxopropyl phosphate; that span reads GH.

The protein belongs to the PNP synthase family. Homooctamer; tetramer of dimers.

It is found in the cytoplasm. It catalyses the reaction 3-amino-2-oxopropyl phosphate + 1-deoxy-D-xylulose 5-phosphate = pyridoxine 5'-phosphate + phosphate + 2 H2O + H(+). It participates in cofactor biosynthesis; pyridoxine 5'-phosphate biosynthesis; pyridoxine 5'-phosphate from D-erythrose 4-phosphate: step 5/5. Catalyzes the complicated ring closure reaction between the two acyclic compounds 1-deoxy-D-xylulose-5-phosphate (DXP) and 3-amino-2-oxopropyl phosphate (1-amino-acetone-3-phosphate or AAP) to form pyridoxine 5'-phosphate (PNP) and inorganic phosphate. This Ralstonia nicotianae (strain ATCC BAA-1114 / GMI1000) (Ralstonia solanacearum) protein is Pyridoxine 5'-phosphate synthase.